We begin with the raw amino-acid sequence, 267 residues long: Electron transfer flavoprotein subunit beta (267 aa).

This sequence belongs to the ETF beta-subunit/FixA family. As to quaternary structure, heterodimer of an alpha and a beta subunit.

Its function is as follows. Participates in the electron transfer process during N,N-dimethylglycine (DMG) degradation to sarcosine. The protein is Electron transfer flavoprotein subunit beta of Chromohalobacter salexigens (strain ATCC BAA-138 / DSM 3043 / CIP 106854 / NCIMB 13768 / 1H11).